The primary structure comprises 564 residues: MFS-type transporter grgE (564 aa).

Over residues 1–10 the composition is skewed to basic and acidic residues; it reads MAENQVDPKR. Residues 1–52 form a disordered region; it reads MAENQVDPKRNLPLYGAADESTSATDKEDEVENVRQNGSAPPIEEARESNEA. The N-linked (GlcNAc...) asparagine glycan is linked to Asn-37. The next 7 helical transmembrane spans lie at 60-80, 101-118, 131-151, 161-181, 192-212, 220-240, and 262-282; these read HGLSLFFIVLAIMLATFIISL, KVSWYGSAYFMTFGGFQT, TTFLVSLFIFEIGSLICGVAP, AIAGLGGAGMATGGFTIIAFS, GLVGSAYGLSAVAGPLIGGAF, WCFYINLPVGGLAAVIILIFF, and LVGVSLLMCLIICFILALQYG. A glycan (N-linked (GlcNAc...) asparagine) is linked at Asn-289. The next 7 membrane-spanning stretches (helical) occupy residues 293–313, 329–349, 368–388, 392–412, 425–445, 462–482, and 531–551; these read VIGLLVGFVAILVALIIWEYY, ALWAPSTYMFFFAGSYFILLY, VRNLPMVVTFSIAAILAGAFV, GIATPVMLVGAAIATIGTGLI, IGYQILAAFGFVIPWLIPMNI, IFLAQTLGGAFSVSAAQSAFV, and TFAISVGMVGFACLMGLFTPW.

Belongs to the major facilitator superfamily.

The protein localises to the membrane. In terms of biological role, MFS-type transporter; part of the gene cluster that mediates the biosynthesis of gregatin A, a fungal polyketide featuring an alkylated furanone core. The protein is MFS-type transporter grgE of Penicillium sp.